Reading from the N-terminus, the 180-residue chain is MLYDDFYVKSLIQTIEDWPKQGISFRDITPIFSDPKGMRMVVDAYVHRYIATDITHIACIDARGFLIAAVLAYELQKPLILVRKKGKLPGKTISQKYALEYGEAELEIQEGAVKAGDEVLLFDDLIATGGTLLAAIELLTSQGASIKEVAAIIDLPDLGGSQKLRDSDIPVFSLCAYDGE.

The protein belongs to the purine/pyrimidine phosphoribosyltransferase family. In terms of assembly, homodimer.

It localises to the cytoplasm. It catalyses the reaction AMP + diphosphate = 5-phospho-alpha-D-ribose 1-diphosphate + adenine. The protein operates within purine metabolism; AMP biosynthesis via salvage pathway; AMP from adenine: step 1/1. Catalyzes a salvage reaction resulting in the formation of AMP, that is energically less costly than de novo synthesis. This chain is Adenine phosphoribosyltransferase, found in Marinomonas sp. (strain MWYL1).